Reading from the N-terminus, the 119-residue chain is MIRGIGVDVVDVARFARSAERTPGLVPRLFAPAERSLPTRSLAARFAAKEALIKALGGPGGISWQDMEVVRDAHGDPSFQVGGAVARVAAARGVTRIHLSMSHDAGLATAFVVTEGEGA.

2 residues coordinate Mg(2+): Asp8 and Glu50.

Belongs to the P-Pant transferase superfamily. AcpS family. Mg(2+) serves as cofactor.

The protein resides in the cytoplasm. The enzyme catalyses apo-[ACP] + CoA = holo-[ACP] + adenosine 3',5'-bisphosphate + H(+). Functionally, transfers the 4'-phosphopantetheine moiety from coenzyme A to a Ser of acyl-carrier-protein. This Clavibacter sepedonicus (Clavibacter michiganensis subsp. sepedonicus) protein is Holo-[acyl-carrier-protein] synthase.